A 146-amino-acid polypeptide reads, in one-letter code: Endoribonuclease YbeY (146 aa).

Residues His108, His112, and His118 each coordinate Zn(2+).

Belongs to the endoribonuclease YbeY family. Zn(2+) serves as cofactor.

The protein resides in the cytoplasm. In terms of biological role, single strand-specific metallo-endoribonuclease involved in late-stage 70S ribosome quality control and in maturation of the 3' terminus of the 16S rRNA. The protein is Endoribonuclease YbeY of Aster yellows witches'-broom phytoplasma (strain AYWB).